The primary structure comprises 164 residues: Transcriptional repressor NrdR (164 aa).

A zinc finger lies at 3–34 (CPFCRHEDSRVVDSRSLDDGSAIRRRRQCQAC). In terms of domain architecture, ATP-cone spans 46 to 136 (LTVVKRSGVA…VYRDFESLDD (91 aa)).

This sequence belongs to the NrdR family. Zn(2+) is required as a cofactor.

In terms of biological role, negatively regulates transcription of bacterial ribonucleotide reductase nrd genes and operons by binding to NrdR-boxes. This is Transcriptional repressor NrdR from Micrococcus luteus (strain ATCC 4698 / DSM 20030 / JCM 1464 / CCM 169 / CCUG 5858 / IAM 1056 / NBRC 3333 / NCIMB 9278 / NCTC 2665 / VKM Ac-2230) (Micrococcus lysodeikticus).